The following is a 201-amino-acid chain: Probable phosphopantothenoylcysteine decarboxylase (201 aa).

Residues 20-22, 45-47, 98-101, and Ala-132 contribute to the FMN site; these read GSV, SKS, and SANT. Substrate contacts are provided by residues Asn-134 and 164 to 166; that span reads KLA. The Proton donor role is filled by Cys-167. Position 175 (Met-175) interacts with substrate.

The protein belongs to the HFCD (homooligomeric flavin containing Cys decarboxylase) superfamily. As to quaternary structure, homotrimer. FMN serves as cofactor. Expressed in roots, shoots, leaves, flowers, developing siliques and seeds.

The catalysed reaction is N-[(R)-4-phosphopantothenoyl]-L-cysteine + H(+) = (R)-4'-phosphopantetheine + CO2. The protein operates within cofactor biosynthesis; coenzyme A biosynthesis; CoA from (R)-pantothenate: step 3/5. Its function is as follows. Involved in plant growth and salt and osmotic tolerance. Catalyzes the decarboxylation of 4'-phosphopantothenoylcysteine to 4'-phosphopantetheine, a key step in coenzyme A biosynthesis. The enzyme is also able to decarboxylate pantothenoylcysteine to pantothenoylcysteamine. This Arabidopsis thaliana (Mouse-ear cress) protein is Probable phosphopantothenoylcysteine decarboxylase (HAL3B).